The chain runs to 471 residues: N-succinylglutamate 5-semialdehyde dehydrogenase (471 aa).

207 to 212 is an NAD(+) binding site; that stretch reads GSAHAG. Catalysis depends on residues glutamate 230 and cysteine 264.

It belongs to the aldehyde dehydrogenase family. AstD subfamily.

It catalyses the reaction N-succinyl-L-glutamate 5-semialdehyde + NAD(+) + H2O = N-succinyl-L-glutamate + NADH + 2 H(+). Its pathway is amino-acid degradation; L-arginine degradation via AST pathway; L-glutamate and succinate from L-arginine: step 4/5. Functionally, catalyzes the NAD-dependent reduction of succinylglutamate semialdehyde into succinylglutamate. The polypeptide is N-succinylglutamate 5-semialdehyde dehydrogenase (Novosphingobium aromaticivorans (strain ATCC 700278 / DSM 12444 / CCUG 56034 / CIP 105152 / NBRC 16084 / F199)).